The primary structure comprises 918 residues: uncharacterized protein (918 aa).

7 disordered regions span residues A66–G150, G226–F283, A326–N481, A515–L548, E594–K707, N737–T774, and H800–M918. The span at Q79–S89 shows a compositional bias: low complexity. Positions N103–S127 are enriched in basic and acidic residues. The segment covering S270–A281 has biased composition (low complexity). 3 stretches are compositionally biased toward polar residues: residues A326–L354, K363–D372, and A379–E404. Residues S430–S441 show a composition bias toward low complexity. Residues A515–K533 show a composition bias toward basic and acidic residues. 2 stretches are compositionally biased toward polar residues: residues G534–G545 and V604–S619. A compositionally biased stretch (low complexity) spans S632 to D647. The span at V648–E660 shows a compositional bias: basic and acidic residues. Residues S661–S672 show a composition bias toward polar residues. Residues E673–N688 show a composition bias toward basic and acidic residues. Residues A689–K702 are compositionally biased toward polar residues. Basic and acidic residues-rich tracts occupy residues H738–H765, H800–H814, E830–Q846, and L883–M918.

This is an uncharacterized protein from Caenorhabditis elegans.